The following is a 348-amino-acid chain: MRKMSEEEFYLFKNISSVGPWDGPQYHIAPVWAFYLQAAFMGTVFLIGFPLNAMVLVATLRYKKLRQPLNYILVNVSFGGFLLCIFSVFPVFVASCNGYFVFGRHVCALEGFLGTVAGLVTGWSLAFLAFERYIVICKPFGNFRFSSKHALTVVLATWTIGIGVSIPPFFGWSRFIPEGLQCSCGPDWYTVGTKYRSESYTWFLFIFCFIVPLSLICFSYTQLLRALKAVAAQQQESATTQKAEREVSRMVVVMVGSFCVCYVPYAAFAMYMVNNRNHGLDLRLVTIPSFFSKSACIYNPIIYCFMNKQFQACIMKMVCGKAMTDESDTCSSQKTEVSTVSSTQVGPN.

At 1-33 the chain is on the extracellular side; it reads MRKMSEEEFYLFKNISSVGPWDGPQYHIAPVWA. N14 carries N-linked (GlcNAc...) asparagine glycosylation. The helical transmembrane segment at 34-58 threads the bilayer; it reads FYLQAAFMGTVFLIGFPLNAMVLVA. Topologically, residues 59–70 are cytoplasmic; the sequence is TLRYKKLRQPLN. Residues 71-96 traverse the membrane as a helical segment; sequence YILVNVSFGGFLLCIFSVFPVFVASC. At 97–110 the chain is on the extracellular side; sequence NGYFVFGRHVCALE. C107 and C184 are joined by a disulfide. A helical membrane pass occupies residues 111 to 130; that stretch reads GFLGTVAGLVTGWSLAFLAF. Over 131–149 the chain is Cytoplasmic; sequence ERYIVICKPFGNFRFSSKH. A helical membrane pass occupies residues 150 to 173; sequence ALTVVLATWTIGIGVSIPPFFGWS. Residues 174–199 lie on the Extracellular side of the membrane; that stretch reads RFIPEGLQCSCGPDWYTVGTKYRSES. Residues 200 to 227 form a helical membrane-spanning segment; it reads YTWFLFIFCFIVPLSLICFSYTQLLRAL. Residues 228 to 249 are Cytoplasmic-facing; the sequence is KAVAAQQQESATTQKAEREVSR. The chain crosses the membrane as a helical span at residues 250–273; sequence MVVVMVGSFCVCYVPYAAFAMYMV. Residues 274–281 are Extracellular-facing; it reads NNRNHGLD. Residues 282–306 form a helical membrane-spanning segment; that stretch reads LRLVTIPSFFSKSACIYNPIIYCFM. An N6-(retinylidene)lysine modification is found at K293. At 307–348 the chain is on the cytoplasmic side; that stretch reads NKQFQACIMKMVCGKAMTDESDTCSSQKTEVSTVSSTQVGPN.

Belongs to the G-protein coupled receptor 1 family. Opsin subfamily. In terms of processing, phosphorylated on some or all of the serine and threonine residues present in the C-terminal region.

Its subcellular location is the cell membrane. The protein resides in the photoreceptor inner segment. It is found in the cell projection. The protein localises to the cilium. It localises to the photoreceptor outer segment. Its subcellular location is the cytoplasm. The protein resides in the perinuclear region. Functionally, visual pigments are the light-absorbing molecules that mediate vision. They consist of an apoprotein, opsin, covalently linked to cis-retinal. Required for the maintenance of cone outer segment organization in the ventral retina, but not essential for the maintenance of functioning cone photoreceptors. Involved in ensuring correct abundance and localization of retinal membrane proteins. May increase spectral sensitivity in dim light. This chain is Short-wave-sensitive opsin 1 (OPN1SW), found in Pan paniscus (Pygmy chimpanzee).